Reading from the N-terminus, the 530-residue chain is 2,3-bisphosphoglycerate-independent phosphoglycerate mutase (530 aa).

The Mn(2+) site is built by D15 and S65. The active-site Phosphoserine intermediate is S65. Residues H126, 155 to 156 (RD), R187, R193, 257 to 260 (RPDR), and K330 contribute to the substrate site. D397, H401, D438, H439, and H456 together coordinate Mn(2+).

It belongs to the BPG-independent phosphoglycerate mutase family. As to quaternary structure, monomer. Mn(2+) serves as cofactor.

It carries out the reaction (2R)-2-phosphoglycerate = (2R)-3-phosphoglycerate. It participates in carbohydrate degradation; glycolysis; pyruvate from D-glyceraldehyde 3-phosphate: step 3/5. In terms of biological role, catalyzes the interconversion of 2-phosphoglycerate and 3-phosphoglycerate. The polypeptide is 2,3-bisphosphoglycerate-independent phosphoglycerate mutase (Synechococcus sp. (strain JA-3-3Ab) (Cyanobacteria bacterium Yellowstone A-Prime)).